The primary structure comprises 307 residues: Glycine--tRNA ligase alpha subunit (307 aa).

Belongs to the class-II aminoacyl-tRNA synthetase family. In terms of assembly, tetramer of two alpha and two beta subunits.

The protein resides in the cytoplasm. It catalyses the reaction tRNA(Gly) + glycine + ATP = glycyl-tRNA(Gly) + AMP + diphosphate. This Aeromonas hydrophila subsp. hydrophila (strain ATCC 7966 / DSM 30187 / BCRC 13018 / CCUG 14551 / JCM 1027 / KCTC 2358 / NCIMB 9240 / NCTC 8049) protein is Glycine--tRNA ligase alpha subunit.